The primary structure comprises 411 residues: Exodeoxyribonuclease 7 large subunit (411 aa).

Belongs to the XseA family. As to quaternary structure, heterooligomer composed of large and small subunits.

The protein localises to the cytoplasm. It catalyses the reaction Exonucleolytic cleavage in either 5'- to 3'- or 3'- to 5'-direction to yield nucleoside 5'-phosphates.. Bidirectionally degrades single-stranded DNA into large acid-insoluble oligonucleotides, which are then degraded further into small acid-soluble oligonucleotides. In Mycobacterium sp. (strain KMS), this protein is Exodeoxyribonuclease 7 large subunit.